The primary structure comprises 572 residues: MYRVLSKLSSSIGSSTSRKLVSGRIISSRNYAAKDISFGIGARAAMLQGVSEVAEAVKVTMGPKGRNVIIESSYGGPKITKDGVTVAKSISFQAKAKNIGAELVKQVASATNKVAGDGTTCATVLTQAILIEGCKSVAAGVNVMDLRVGINMAIAAVVSDLKSRAVMISTPEEITQVATISANGEREIGELIARAMEKVGKEGVITVADGNTLDNELEVVEGMKLARGYISPYFITDEKTQKCELENPIILIHEKKISDINSLLKVLEAAVKSSRPLLIVAEDVESDALAMLILNKHHGGLKVCAIKAPGFGDNRKASLDDLAVLTGAEVISEERGLSLEKIRPELLGTAKKVTVTRDDTIILHGGGDKKLIEERCEELRSANEKSTSTFDQEKTQERLSKLSGGVAVFKVGGASESEVGERKDRVTDALNATRAAVEEGIIPGGGVALLYATKALDNLQTENEDQRRGVQIVQNALKAPAFTIAANAGYDGSLVVGKLLEQDDCNFGFDAAKGKYVDMVKAGIIDPVKVIRTALTDAASVSLLLTTTEASVLVKADENTPNHVPDMASMGM.

Residues 1–31 constitute a mitochondrion transit peptide; the sequence is MYRVLSKLSSSIGSSTSRKLVSGRIISSRNY.

Belongs to the chaperonin (HSP60) family.

The protein resides in the mitochondrion. Functionally, implicated in mitochondrial protein import and macromolecular assembly. May facilitate the correct folding of imported proteins. May also prevent misfolding and promote the refolding and proper assembly of unfolded polypeptides generated under stress conditions in the mitochondrial matrix. The protein is Chaperonin CPN60-like 2, mitochondrial of Arabidopsis thaliana (Mouse-ear cress).